The following is a 409-amino-acid chain: Peptidase T (409 aa).

Position 78 (H78) interacts with Zn(2+). The active site involves D80. D140 is a binding site for Zn(2+). The Proton acceptor role is filled by E173. Residues E174, D196, and H379 each contribute to the Zn(2+) site.

Belongs to the peptidase M20B family. Zn(2+) serves as cofactor.

The protein localises to the cytoplasm. The catalysed reaction is Release of the N-terminal residue from a tripeptide.. Its function is as follows. Cleaves the N-terminal amino acid of tripeptides. This is Peptidase T from Salmonella heidelberg (strain SL476).